Consider the following 397-residue polypeptide: Acetate kinase (397 aa).

Position 7 (N7) interacts with Mg(2+). Residue K14 coordinates ATP. A substrate-binding site is contributed by R90. D147 (proton donor/acceptor) is an active-site residue. Residues 207–211 (HLGNG), 282–284 (DFR), and 330–334 (GLGEN) each bind ATP. E383 is a Mg(2+) binding site.

It belongs to the acetokinase family. As to quaternary structure, homodimer. Requires Mg(2+) as cofactor. The cofactor is Mn(2+).

The protein localises to the cytoplasm. The enzyme catalyses acetate + ATP = acetyl phosphate + ADP. It participates in metabolic intermediate biosynthesis; acetyl-CoA biosynthesis; acetyl-CoA from acetate: step 1/2. Its function is as follows. Catalyzes the formation of acetyl phosphate from acetate and ATP. Can also catalyze the reverse reaction. The sequence is that of Acetate kinase from Clostridium botulinum (strain Langeland / NCTC 10281 / Type F).